A 571-amino-acid polypeptide reads, in one-letter code: Proline--tRNA ligase (571 aa).

It belongs to the class-II aminoacyl-tRNA synthetase family. ProS type 1 subfamily. Homodimer.

The protein localises to the cytoplasm. The catalysed reaction is tRNA(Pro) + L-proline + ATP = L-prolyl-tRNA(Pro) + AMP + diphosphate. Its function is as follows. Catalyzes the attachment of proline to tRNA(Pro) in a two-step reaction: proline is first activated by ATP to form Pro-AMP and then transferred to the acceptor end of tRNA(Pro). As ProRS can inadvertently accommodate and process non-cognate amino acids such as alanine and cysteine, to avoid such errors it has two additional distinct editing activities against alanine. One activity is designated as 'pretransfer' editing and involves the tRNA(Pro)-independent hydrolysis of activated Ala-AMP. The other activity is designated 'posttransfer' editing and involves deacylation of mischarged Ala-tRNA(Pro). The misacylated Cys-tRNA(Pro) is not edited by ProRS. The sequence is that of Proline--tRNA ligase from Pseudomonas syringae pv. syringae (strain B728a).